The primary structure comprises 275 residues: Beta-lactamase OXA-3 (275 aa).

A signal peptide spans 1 to 21 (MAIRIFAILFSTFVFGTFAHA). Residue serine 72 is the Acyl-ester intermediate of the active site. At lysine 75 the chain carries N6-carboxylysine. 210-212 (KTG) contributes to the substrate binding site.

It belongs to the class-D beta-lactamase family.

The enzyme catalyses a beta-lactam + H2O = a substituted beta-amino acid. Its function is as follows. This is an oxacillin-hydrolyzing beta-lactamase. The protein is Beta-lactamase OXA-3 (bla) of Pseudomonas aeruginosa.